Consider the following 105-residue polypeptide: Large ribosomal subunit protein eL42 (105 aa).

The interval 23-61 (KVTQYKKGKESKFAQGRRRYDRKQSGFGGQTKPIFRKKA) is disordered.

The protein belongs to the eukaryotic ribosomal protein eL42 family.

The polypeptide is Large ribosomal subunit protein eL42 (Caenorhabditis elegans).